A 155-amino-acid polypeptide reads, in one-letter code: Ribosomal RNA large subunit methyltransferase H (155 aa).

Residues Leu-73, Gly-104, and 123 to 128 each bind S-adenosyl-L-methionine; that span reads LSPLTL.

The protein belongs to the RNA methyltransferase RlmH family. Homodimer.

It localises to the cytoplasm. The enzyme catalyses pseudouridine(1915) in 23S rRNA + S-adenosyl-L-methionine = N(3)-methylpseudouridine(1915) in 23S rRNA + S-adenosyl-L-homocysteine + H(+). Its function is as follows. Specifically methylates the pseudouridine at position 1915 (m3Psi1915) in 23S rRNA. This is Ribosomal RNA large subunit methyltransferase H from Pseudomonas entomophila (strain L48).